A 122-amino-acid polypeptide reads, in one-letter code: Small ribosomal subunit protein uS13 (122 aa).

Residues 95–116 show a composition bias toward basic residues; the sequence is GLPCRGQKTKTNARTRKGKKKT. The segment at 95-122 is disordered; it reads GLPCRGQKTKTNARTRKGKKKTVGAATK.

It belongs to the universal ribosomal protein uS13 family. As to quaternary structure, part of the 30S ribosomal subunit. Forms a loose heterodimer with protein S19. Forms two bridges to the 50S subunit in the 70S ribosome.

Its function is as follows. Located at the top of the head of the 30S subunit, it contacts several helices of the 16S rRNA. In the 70S ribosome it contacts the 23S rRNA (bridge B1a) and protein L5 of the 50S subunit (bridge B1b), connecting the 2 subunits; these bridges are implicated in subunit movement. Contacts the tRNAs in the A and P-sites. This chain is Small ribosomal subunit protein uS13, found in Aliarcobacter butzleri (strain RM4018) (Arcobacter butzleri).